A 525-amino-acid chain; its full sequence is GMP synthase [glutamine-hydrolyzing] (525 aa).

The region spanning 9–207 is the Glutamine amidotransferase type-1 domain; that stretch reads RILILDFGSQ…VLDICGCDAL (199 aa). Residue Cys-86 is the Nucleophile of the active site. Active-site residues include His-181 and Glu-183. One can recognise a GMPS ATP-PPase domain in the interval 208–400; sequence WTSAAIIEDT…LGLPYDMLYR (193 aa). Residue 235 to 241 participates in ATP binding; sequence SGGVDSS.

In terms of assembly, homodimer.

The catalysed reaction is XMP + L-glutamine + ATP + H2O = GMP + L-glutamate + AMP + diphosphate + 2 H(+). It functions in the pathway purine metabolism; GMP biosynthesis; GMP from XMP (L-Gln route): step 1/1. Its function is as follows. Catalyzes the synthesis of GMP from XMP. The sequence is that of GMP synthase [glutamine-hydrolyzing] from Proteus mirabilis (strain HI4320).